The chain runs to 4730 residues: Dynein heavy chain, cytoplasmic (4730 aa).

Disordered stretches follow at residues 1-23 (MEDQ…VVTP) and 91-120 (TINS…QQQS). A stem region spans residues 1–1935 (MEDQQINVDS…VIHMANATFY (1935 aa)). Over residues 10-23 (SPTSGTNTPPVVTP) the composition is skewed to low complexity. The stretch at 867–900 (VRKLSTSINNFRDKVDDLIVKYSEIKKQLDGLKS) forms a coiled coil. Residues 964-1016 (EDQKDSQSTSGSSNKGGKLNRMNYSIRNKSDEENSSDLTQPQQSQQQQQTISI) are disordered. Residues 969–978 (SQSTSGSSNK) show a composition bias toward polar residues. Residues 1002 to 1016 (TQPQQSQQQQQTISI) are compositionally biased toward low complexity. 4 coiled-coil regions span residues 1204–1224 (EKMN…EKLS), 1343–1372 (ALET…QALD), 1425–1441 (RKVR…LKNL), and 1661–1689 (AIER…YLER). AAA stretches follow at residues 1936-2158 (YGFE…VLVS), 2238-2531 (KKIQ…FTRL), 2635-2885 (EVET…WDRA), and 2978-3252 (VFYE…QGRQ). ATP is bound at residue 1974–1981 (GPAGTGKT). Positions 2231–2253 (IQMDQLRKKIQEIAKQRHLVTKQ) form a coiled coil. Residue 2276–2283 (GPSGGGKT) participates in ATP binding. The segment at 2437-2486 (EPFDPQEKEQQKRNENAQLQQQQQTTITSPILTSPPTTSSSSRSTTSTTS) is disordered. The span at 2441–2451 (PQEKEQQKRNE) shows a compositional bias: basic and acidic residues. Residues 2442 to 2462 (QEKEQQKRNENAQLQQQQQTT) are a coiled coil. Positions 2454 to 2486 (QLQQQQQTTITSPILTSPPTTSSSSRSTTSTTS) are enriched in low complexity. Residues 2674 to 2681 (GPPGSGKT) and 3016 to 3023 (GVSGGGKS) contribute to the ATP site. Coiled coils occupy residues 3271–3349 (INEK…VQLD), 3483–3585 (AQTY…NTQM), and 3854–3881 (TLET…EISE). Residues 3271-3585 (INEKRDQLEE…QQSENFNTQM (315 aa)) are stalk. AAA regions lie at residues 3638–3867 (LSKP…EIAL) and 4098–4312 (SHSF…SIDY). Positions 4432–4465 (KMQSSEEDGEDDQVSGSSKKESSSSSSEDKGKAK) are disordered. Basic and acidic residues predominate over residues 4449–4463 (SKKESSSSSSEDKGK).

Belongs to the dynein heavy chain family. Consists of at least two heavy chains and a number of intermediate and light chains.

Its subcellular location is the cytoplasm. It is found in the cytoskeleton. In terms of biological role, cytoplasmic dynein acts as a motor for the intracellular retrograde motility of vesicles and organelles along microtubules. Dynein has ATPase activity; the force-producing power stroke is thought to occur on release of ADP. In Dictyostelium discoideum (Social amoeba), this protein is Dynein heavy chain, cytoplasmic (dhcA).